A 368-amino-acid chain; its full sequence is tRNA(Met) cytidine acetate ligase (368 aa).

ATP contacts are provided by residues isoleucine 7–leucine 20, glycine 96, asparagine 152, and arginine 175.

The protein belongs to the TmcAL family.

The protein localises to the cytoplasm. It carries out the reaction cytidine(34) in elongator tRNA(Met) + acetate + ATP = N(4)-acetylcytidine(34) in elongator tRNA(Met) + AMP + diphosphate. Functionally, catalyzes the formation of N(4)-acetylcytidine (ac(4)C) at the wobble position of elongator tRNA(Met), using acetate and ATP as substrates. First activates an acetate ion to form acetyladenylate (Ac-AMP) and then transfers the acetyl group to tRNA to form ac(4)C34. In Streptococcus pyogenes serotype M1, this protein is tRNA(Met) cytidine acetate ligase.